Consider the following 490-residue polypeptide: GDP-fucose protein O-fucosyltransferase 2 (490 aa).

The first 25 residues, 1–25 (MRGSWPRLGFPALLLLLHLLTGSDA), serve as a signal peptide directing secretion. N-linked (GlcNAc...) asparagine glycosylation is found at Asn29 and Asn79. Position 81 to 85 (81 to 85 (SEGFN)) interacts with GDP-beta-L-fucose. The active-site Proton acceptor is the Glu82. Residues Cys203 and Cys226 are joined by a disulfide bond. 336–338 (HLR) is a GDP-beta-L-fucose binding site. N-linked (GlcNAc...) asparagine glycosylation occurs at Asn368. GDP-beta-L-fucose is bound by residues Asp418 and 435–436 (TF). A disulfide bridge links Cys459 with Cys466.

The protein belongs to the glycosyltransferase 68 family.

It localises to the endoplasmic reticulum. Its subcellular location is the golgi apparatus. The catalysed reaction is L-seryl-[protein] + GDP-beta-L-fucose = 3-O-(alpha-L-fucosyl)-L-seryl-[protein] + GDP + H(+). It carries out the reaction L-threonyl-[protein] + GDP-beta-L-fucose = 3-O-(alpha-L-fucosyl)-L-threonyl-[protein] + GDP + H(+). It functions in the pathway protein modification; protein glycosylation. With respect to regulation, does not require divalent metal ions for optimal activity. In terms of biological role, catalyzes the reaction that attaches fucose through an O-glycosidic linkage to a conserved serine or threonine residue in the consensus sequence C1-X-X-S/T-C2 of thrombospondin type I repeats (TSRs) where C1 and C2 are the first and second cysteines of the repeat, respectively. O-fucosylates members of several protein families including the ADAMTS, the thrombospondin (TSP) and spondin families. The sequence is that of GDP-fucose protein O-fucosyltransferase 2 from Drosophila melanogaster (Fruit fly).